The chain runs to 349 residues: Ribosomal RNA small subunit methyltransferase H 2 (349 aa).

Residues 80-82 (GGH), Asp-100, Phe-130, Asp-149, and Gln-156 each bind S-adenosyl-L-methionine.

Belongs to the methyltransferase superfamily. RsmH family.

It localises to the cytoplasm. It catalyses the reaction cytidine(1402) in 16S rRNA + S-adenosyl-L-methionine = N(4)-methylcytidine(1402) in 16S rRNA + S-adenosyl-L-homocysteine + H(+). In terms of biological role, specifically methylates the N4 position of cytidine in position 1402 (C1402) of 16S rRNA. The sequence is that of Ribosomal RNA small subunit methyltransferase H 2 from Alkaliphilus metalliredigens (strain QYMF).